We begin with the raw amino-acid sequence, 335 residues long: Tryptophan--tRNA ligase (335 aa).

ATP contacts are provided by residues 13 to 15 (QPS) and 21 to 22 (GN). The 'HIGH' region signature appears at 14 to 22 (PSGNLTIGN). Position 136 (aspartate 136) interacts with L-tryptophan. ATP-binding positions include 148-150 (GQD), isoleucine 187, and 196-200 (KMSKS). A 'KMSKS' region motif is present at residues 196–200 (KMSKS).

Belongs to the class-I aminoacyl-tRNA synthetase family. In terms of assembly, homodimer.

The protein localises to the cytoplasm. The enzyme catalyses tRNA(Trp) + L-tryptophan + ATP = L-tryptophyl-tRNA(Trp) + AMP + diphosphate + H(+). Functionally, catalyzes the attachment of tryptophan to tRNA(Trp). The sequence is that of Tryptophan--tRNA ligase from Buchnera aphidicola subsp. Acyrthosiphon pisum (strain APS) (Acyrthosiphon pisum symbiotic bacterium).